The chain runs to 425 residues: Adenylosuccinate synthetase (425 aa).

GTP-binding positions include 12–18 (GDEGKGK) and 40–42 (GHT). D13 acts as the Proton acceptor in catalysis. 2 residues coordinate Mg(2+): D13 and G40. IMP contacts are provided by residues 13-16 (DEGK), 38-41 (NAGH), T130, R144, Q224, T239, and R301. Residue H41 is the Proton donor of the active site. 297-303 (TVSNRRR) serves as a coordination point for substrate. Residues R303, 329–331 (KLD), and 411–413 (STS) contribute to the GTP site.

The protein belongs to the adenylosuccinate synthetase family. In terms of assembly, homodimer. Requires Mg(2+) as cofactor.

It is found in the cytoplasm. The catalysed reaction is IMP + L-aspartate + GTP = N(6)-(1,2-dicarboxyethyl)-AMP + GDP + phosphate + 2 H(+). It participates in purine metabolism; AMP biosynthesis via de novo pathway; AMP from IMP: step 1/2. Plays an important role in the de novo pathway of purine nucleotide biosynthesis. Catalyzes the first committed step in the biosynthesis of AMP from IMP. The sequence is that of Adenylosuccinate synthetase from Wolbachia pipientis subsp. Culex pipiens (strain wPip).